The sequence spans 460 residues: Allantoinase (460 aa).

The Zn(2+) site is built by His-70, His-72, Lys-157, His-193, His-250, and Asp-323. N6-carboxylysine is present on Lys-157.

This sequence belongs to the metallo-dependent hydrolases superfamily. Allantoinase family. Homotetramer. It depends on Zn(2+) as a cofactor. In terms of processing, carboxylation allows a single lysine to coordinate two zinc ions.

It catalyses the reaction (S)-allantoin + H2O = allantoate + H(+). The protein operates within nitrogen metabolism; (S)-allantoin degradation; allantoate from (S)-allantoin: step 1/1. Functionally, catalyzes the conversion of allantoin (5-ureidohydantoin) to allantoic acid by hydrolytic cleavage of the five-member hydantoin ring. Involved in the utilization of purines as secondary nitrogen sources, when primary sources are limiting. This is Allantoinase (DAL1) from Saccharomyces cerevisiae (strain ATCC 204508 / S288c) (Baker's yeast).